Reading from the N-terminus, the 192-residue chain is Small ribosomal subunit protein eS7 (192 aa).

It belongs to the eukaryotic ribosomal protein eS7 family.

This Secale cereale (Rye) protein is Small ribosomal subunit protein eS7 (RPS7).